The chain runs to 733 residues: Neutral ceramidase 3 (733 aa).

A signal peptide spans 1–25 (MTRWSMSMHCTLFLLFLLRLTCIFS). Residue S307 is the Nucleophile of the active site. N325 carries an N-linked (GlcNAc...) asparagine glycan.

It belongs to the neutral ceramidase family.

It is found in the secreted. It localises to the endoplasmic reticulum. The protein localises to the golgi apparatus. It catalyses the reaction an N-acylsphing-4-enine + H2O = sphing-4-enine + a fatty acid. Functionally, hydrolyzes the sphingolipid ceramide into sphingosine and free fatty acid. Promotes oxidative stress resistance. This Arabidopsis thaliana (Mouse-ear cress) protein is Neutral ceramidase 3.